Consider the following 454-residue polypeptide: tRNA modification GTPase MnmE (454 aa).

Positions 23, 80, and 120 each coordinate (6S)-5-formyl-5,6,7,8-tetrahydrofolate. The TrmE-type G domain maps to 216–377 (GMKVVIAGKP…LRTHLKQSMG (162 aa)). N226 serves as a coordination point for K(+). GTP is bound by residues 226-231 (NAGKSS), 245-251 (TAIAGTT), 270-273 (DTAG), and 335-338 (NKAD). S230 contributes to the Mg(2+) binding site. Residues T245, I247, and T250 each coordinate K(+). T251 contributes to the Mg(2+) binding site. K454 serves as a coordination point for (6S)-5-formyl-5,6,7,8-tetrahydrofolate.

It belongs to the TRAFAC class TrmE-Era-EngA-EngB-Septin-like GTPase superfamily. TrmE GTPase family. In terms of assembly, homodimer. Heterotetramer of two MnmE and two MnmG subunits. K(+) is required as a cofactor.

Its subcellular location is the cytoplasm. Functionally, exhibits a very high intrinsic GTPase hydrolysis rate. Involved in the addition of a carboxymethylaminomethyl (cmnm) group at the wobble position (U34) of certain tRNAs, forming tRNA-cmnm(5)s(2)U34. This chain is tRNA modification GTPase MnmE, found in Sodalis glossinidius (strain morsitans).